A 553-amino-acid chain; its full sequence is MRDYDEVIAFLGEWGPFQRLIFFLLSASIIPNGFNGMSVVFLAGTPEHRCLVPDTVNLSSSWRNHSIPLETKDGRQVPQSCRRYRLATIANFSAMGLEPGQDVDLEQLEQESCLDGWEYDKDIFLSTIVTEWNLVCEDDWKTPLTTSLFFVGVLCGSFVSGQLSDRFGRKKVLFATMAVQTGFSFVQIFSTNWEMFTVLFAIVGMGQISNYVVAFILGTEILSKSVRIIFSTLGVCTFFAIGYMVLPLFAYFIRDWRMLLLALTLPGLFCVPLWWFIPESPRWLISQRRFAEAEQIIQKAAKMNSIVAPAGIFDPLELQELNSLKQQKVIILDLFRTRNIATITVMAVMLWMLTSVGYFALSLNVPNLHGDVYLNCFLSGLIEVPAYFTAWLLLRTLPRRYIIAGVLFWGGGVLLLIQVVPEDYNFVSIGLVMLGKFGITSAFSMLYVFTAELYPTLVRNMAVGITSMASRVGSIIAPYFVYLGAYNRLLPYILMGSLTVLIGIITLFFPESFGVTLPENLEQMQKVRGFRCGKKSTVSVDREESPKVLITAF.

Topologically, residues 1 to 20 (MRDYDEVIAFLGEWGPFQRL) are cytoplasmic. A helical membrane pass occupies residues 21-41 (IFFLLSASIIPNGFNGMSVVF). At 42 to 142 (LAGTPEHRCL…NLVCEDDWKT (101 aa)) the chain is on the extracellular side. N-linked (GlcNAc...) asparagine glycans are attached at residues Asn-57, Asn-64, and Asn-91. The chain crosses the membrane as a helical span at residues 143-163 (PLTTSLFFVGVLCGSFVSGQL). The Cytoplasmic portion of the chain corresponds to 164-171 (SDRFGRKK). Residues 172–192 (VLFATMAVQTGFSFVQIFSTN) traverse the membrane as a helical segment. Residues 193-197 (WEMFT) lie on the Extracellular side of the membrane. The chain crosses the membrane as a helical span at residues 198-218 (VLFAIVGMGQISNYVVAFILG). 218–225 (GTEILSKS) contacts ATP. Residues 219–232 (TEILSKSVRIIFST) are Cytoplasmic-facing. A helical transmembrane segment spans residues 233 to 253 (LGVCTFFAIGYMVLPLFAYFI). At 254-257 (RDWR) the chain is on the extracellular side. A helical transmembrane segment spans residues 258–278 (MLLLALTLPGLFCVPLWWFIP). Topologically, residues 279-339 (ESPRWLISQR…IILDLFRTRN (61 aa)) are cytoplasmic. The helical transmembrane segment at 340–360 (IATITVMAVMLWMLTSVGYFA) threads the bilayer. At 361-373 (LSLNVPNLHGDVY) the chain is on the extracellular side. A helical transmembrane segment spans residues 374–394 (LNCFLSGLIEVPAYFTAWLLL). Topologically, residues 395 to 400 (RTLPRR) are cytoplasmic. Residues 401-421 (YIIAGVLFWGGGVLLLIQVVP) form a helical membrane-spanning segment. The Extracellular portion of the chain corresponds to 422 to 428 (EDYNFVS). The chain crosses the membrane as a helical span at residues 429–449 (IGLVMLGKFGITSAFSMLYVF). Residues 450 to 462 (TAELYPTLVRNMA) are Cytoplasmic-facing. A helical transmembrane segment spans residues 463–483 (VGITSMASRVGSIIAPYFVYL). Residues 484-488 (GAYNR) lie on the Extracellular side of the membrane. The helical transmembrane segment at 489–509 (LLPYILMGSLTVLIGIITLFF) threads the bilayer. The Cytoplasmic segment spans residues 510–553 (PESFGVTLPENLEQMQKVRGFRCGKKSTVSVDREESPKVLITAF).

This sequence belongs to the major facilitator (TC 2.A.1) superfamily. Organic cation transporter (TC 2.A.1.19) family. Interacts with PDZK1. Expressed in kidney. Expressed in small intestines. Expressed in liver in non-parenchymal liver tissue such as sinusoidal vessels. Weakly expressed in lung and brain. Expressed in testis and spleen. Expressed in heart.

It localises to the apical cell membrane. Its subcellular location is the mitochondrion membrane. It is found in the basal cell membrane. It catalyses the reaction ergothioneine(out) + Na(+)(out) = ergothioneine(in) + Na(+)(in). The enzyme catalyses acetylcholine(in) = acetylcholine(out). It carries out the reaction (R)-carnitine(out) + Na(+)(out) = (R)-carnitine(in) + Na(+)(in). The catalysed reaction is glycine betaine(out) + Na(+)(out) = glycine betaine(in) + Na(+)(in). With respect to regulation, allosterically activated by intracellular ATP. Transporter that mediates the transport of endogenous and microbial zwitterions and organic cations. Functions as a Na(+)-dependent and pH-dependent high affinity microbial symporter of potent food-derived antioxidant ergothioeine. Transports one sodium ion with one ergothioeine molecule. Involved in the absorption of ergothioneine from the luminal/apical side of the small intestine and renal tubular cells, and into non-parenchymal liver cells, thereby contributing to maintain steady-state ergothioneine level in the body. Also mediates the bidirectional transport of acetycholine, although the exact transport mechanism has not been fully identified yet. Most likely exports anti-inflammatory acetylcholine in non-neuronal tissues, thereby contributing to the non-neuronal cholinergic system. Displays a general physiological role linked to better survival by controlling inflammation and oxidative stress, which may be related to ergothioneine and acetycholine transports. May also function as a low-affinity Na(+)-dependent transporter of L-carnitine through the mitochondrial membrane, thereby maintaining intracellular carnitine homeostasis. May contribute to regulate the transport of cationic compounds in testis across the blood-testis-barrier. The polypeptide is Solute carrier family 22 member 4 (Mus musculus (Mouse)).